Reading from the N-terminus, the 53-residue chain is MAVPKKRTSKSKKKSRRSHWINKAKTRIRNFLNLAKSISNKKATSFAYSTIKN.

The tract at residues 1 to 21 (MAVPKKRTSKSKKKSRRSHWI) is disordered.

Belongs to the bacterial ribosomal protein bL32 family.

The protein resides in the plastid. The protein localises to the chloroplast. The protein is Large ribosomal subunit protein bL32c (rpl32) of Cyanidium caldarium (Red alga).